We begin with the raw amino-acid sequence, 634 residues long: Serine/threonine kinase NLK (634 aa).

The Protein kinase domain maps to 240–531 (SQPDRPIGYG…VEEALQHRYL (292 aa)). ATP-binding positions include 246 to 254 (IGYGAFGVV) and Lys269. Asp366 serves as the catalytic Proton acceptor.

This sequence belongs to the protein kinase superfamily. CMGC Ser/Thr protein kinase family. MAP kinase subfamily. In terms of assembly, component of the beta-catenin-lit-1 complex (also called the lit-1/wrm-1 complex or the wrm-1/lit-1 kinase complex) at least composed of lit-1 and wrm-1. Interacts with wrm-1 (via N-terminus); the interaction is direct and activates lit-1 kinase activity which leads to the phosphorylation of pop-1. This promotes pop-1 interaction with par-5 and translocation of pop-1 from the nucleus to the cytoplasm. Interacts with pop-1 (when phosphorylated on 'Ser-118' and 'Ser-127'); the interaction is dependent on the beta-catenin-lit-1 complex. It depends on Mg(2+) as a cofactor. In terms of tissue distribution, expressed in the pharynx and seam and vulval cells.

It localises to the cytoplasm. The protein localises to the cell cortex. The protein resides in the nucleus. The enzyme catalyses L-seryl-[protein] + ATP = O-phospho-L-seryl-[protein] + ADP + H(+). It carries out the reaction L-threonyl-[protein] + ATP = O-phospho-L-threonyl-[protein] + ADP + H(+). Has a role in the Wnt signaling pathway controlling the asymmetry of cell divisions during embryogenesis. Operates in the AB and EMS cell lineages influencing cell specification. Required for body wall muscle development, endoderm development, pop-1 asymmetry and T-cell division asymmetry. Component of the beta-catenin-lit-1 complex which promotes the phosphorylation, down-regulation and subcellular relocation of pop-1. Regulates plp-1 nuclear localization in embryos. Plays a role in male tail tip morphogenesis. This chain is Serine/threonine kinase NLK, found in Caenorhabditis elegans.